We begin with the raw amino-acid sequence, 335 residues long: 3-isopropylmalate dehydrogenase (335 aa).

4 residues coordinate substrate: Arg-87, Arg-97, Arg-121, and Asp-211. Positions 211, 235, and 239 each coordinate Mg(2+). Gly-271–Asp-283 is an NAD(+) binding site.

The protein belongs to the isocitrate and isopropylmalate dehydrogenases family. LeuB type 2 subfamily. In terms of assembly, homodimer. Requires Mg(2+) as cofactor. The cofactor is Mn(2+).

The protein resides in the cytoplasm. The catalysed reaction is (2R,3S)-3-isopropylmalate + NAD(+) = 4-methyl-2-oxopentanoate + CO2 + NADH. The protein operates within amino-acid biosynthesis; L-leucine biosynthesis; L-leucine from 3-methyl-2-oxobutanoate: step 3/4. Its function is as follows. Catalyzes the oxidation of 3-carboxy-2-hydroxy-4-methylpentanoate (3-isopropylmalate) to 3-carboxy-4-methyl-2-oxopentanoate. The product decarboxylates to 4-methyl-2 oxopentanoate. This Nocardia farcinica (strain IFM 10152) protein is 3-isopropylmalate dehydrogenase.